The primary structure comprises 165 residues: Large ribosomal subunit protein uL10 (165 aa).

It belongs to the universal ribosomal protein uL10 family. In terms of assembly, part of the ribosomal stalk of the 50S ribosomal subunit. The N-terminus interacts with L11 and the large rRNA to form the base of the stalk. The C-terminus forms an elongated spine to which L12 dimers bind in a sequential fashion forming a multimeric L10(L12)X complex.

Functionally, forms part of the ribosomal stalk, playing a central role in the interaction of the ribosome with GTP-bound translation factors. The sequence is that of Large ribosomal subunit protein uL10 from Burkholderia thailandensis (strain ATCC 700388 / DSM 13276 / CCUG 48851 / CIP 106301 / E264).